The sequence spans 137 residues: Fatty acid-binding protein homolog 8 (137 aa).

The Nuclear localization signal motif lies at 24 to 34 (KEIGVGLLIRK).

This sequence belongs to the calycin superfamily. Fatty-acid binding protein (FABP) family. As to quaternary structure, monomer. As to expression, intestine.

It is found in the lysosome. It localises to the nucleus. In terms of biological role, lysosomal lipid chaperone which binds to a wide range of unsaturated fatty acids, including high affinity binding to oleic acid and oleoylethanolamide, to transport them into the nucleus. As part of a lysosome-to-nucleus retrograde lipid signaling pathway, translocates into the nucleus where it activates the transcription of genes promoting longevity and activation of mitochondrial beta oxidation. The sequence is that of Fatty acid-binding protein homolog 8 from Caenorhabditis elegans.